A 509-amino-acid polypeptide reads, in one-letter code: GMP synthase [glutamine-hydrolyzing] (509 aa).

Residues 4–194 (KVIVLDFGGQ…LYEICGLTPD (191 aa)) enclose the Glutamine amidotransferase type-1 domain. Cysteine 81 acts as the Nucleophile in catalysis. Catalysis depends on residues histidine 168 and glutamate 170. A GMPS ATP-PPase domain is found at 195–384 (WTMESFAQKA…LGLPESIVWR (190 aa)). Residue 222–228 (SGGVDSS) coordinates ATP.

Homodimer.

The catalysed reaction is XMP + L-glutamine + ATP + H2O = GMP + L-glutamate + AMP + diphosphate + 2 H(+). It participates in purine metabolism; GMP biosynthesis; GMP from XMP (L-Gln route): step 1/1. Catalyzes the synthesis of GMP from XMP. The polypeptide is GMP synthase [glutamine-hydrolyzing] (Carboxydothermus hydrogenoformans (strain ATCC BAA-161 / DSM 6008 / Z-2901)).